The primary structure comprises 270 residues: Transcriptional regulator BrlR (270 aa).

Methionine 1 contacts 3',3'-c-di-GMP. The region spanning 1–71 is the HTH merR-type domain; it reads MLTIGQLARI…LEAIDRLKRD (71 aa). The H-T-H motif DNA-binding region spans 4 to 23; the sequence is IGQLARIFEISTKTLRHYDA. Residues arginine 31, serine 34, aspartate 35, tyrosine 40, arginine 67, arginine 70, arginine 86, and tyrosine 270 each contribute to the 3',3'-c-di-GMP site. Residues 120-270 form an involved in effector-binding, probably including pyocyanine-binding region; it reads MHARIVERPA…SQVDLYIPIY (151 aa).

As to quaternary structure, monomer. Homodimer; dimer formation enhanced in the presence of the second messenger, cyclic di-GMP (c-di-GMP). Homotetramer; dimer of dimers, arranged in a head-to-tail fashion, which may reduce DNA-binding ability. Conformational changes upon binding c-di-GMP or pyocyanine may facilitate DNA binding.

In terms of biological role, transcriptional regulator. Responsive to the second messenger cyclic di-GMP (c-di-GMP) and to the virulence factor pyocyanine, which both enhance gene expression and promoter DNA binding of BrlR. Activates expression of operons encoding the multidrug efflux pumps MexAB-OprM and MexEF-OprN and several ABC transport systems, acting by direct binding to their respective promoters. Also acts as a repressor of the two component regulatory system, PhoPQ. Binds to promoter of its own gene. Contributes to the antimicrobial tolerance exhibited by biofilms, acting, at least in part, by activating expression of multidrug efflux pumps and ABC transporters. The sequence is that of Transcriptional regulator BrlR from Pseudomonas aeruginosa (strain ATCC 15692 / DSM 22644 / CIP 104116 / JCM 14847 / LMG 12228 / 1C / PRS 101 / PAO1).